Consider the following 554-residue polypeptide: MFCIQCEQTIRTPAGNGCSYSQGMCGKLAATSDLQDLLIYMLQGVSVYAVKARELGIIDAEIDSFVPKAFFSTLTNVNFDDERIMAYAQQAAKYRTQLKASYEAACEQAGIVAEQVPQVAQLVLGTSKIEMLAQAPIALLNKDKHNVHEDIMGLRLLCLYGLKGAAAYMEHARVLGQTDADVAGSFHEIMSFLGEPSVDGDKLFTTAMDIGQLNYRIMAMLDAGETQAFGHPEPTVVNTKSVKGKAILVSGHDMKDLELILEQTVGKGINVFTHGEMLPALAYPAFKKYPHLVGNYGSAWQNQQQEFANFPGAVVMTSNCIIDPNVGSYSDRIFTRSIVGWPGVVHIEGDDFSAVIDKALALEGFIYDEIPHTITIGFARNALMAAAPAVVENVKSGAIKHFFLVGGCDGDKADRSYFTELAKSTPKDSLILTLGCGKYKFNKLEFGDINGIPRLLDVGQCNDAYSAIQLAIALAEVFECDINELPLSLVLSWFEQKAIVVLLTLLSLGVKNIRTGPTPPAFLTANLAKILEEKFGLRNTTTVEADLKTMLNVA.

Positions 3, 6, 18, and 25 each coordinate [2Fe-2S] cluster. 8 residues coordinate hybrid [4Fe-2O-2S] cluster: H252, E276, C320, C408, C436, C461, E495, and K497. C408 is modified (cysteine persulfide).

It belongs to the HCP family. It depends on [2Fe-2S] cluster as a cofactor. Requires hybrid [4Fe-2O-2S] cluster as cofactor.

It localises to the cytoplasm. The enzyme catalyses A + NH4(+) + H2O = hydroxylamine + AH2 + H(+). Its function is as follows. Catalyzes the reduction of hydroxylamine to form NH(3) and H(2)O. The polypeptide is Hydroxylamine reductase (Shewanella baltica (strain OS223)).